Reading from the N-terminus, the 257-residue chain is Pyridoxine 5'-phosphate synthase (257 aa).

Residue Asn-16 coordinates 3-amino-2-oxopropyl phosphate. 1-deoxy-D-xylulose 5-phosphate is bound at residue 18 to 19 (DH). Arg-27 lines the 3-amino-2-oxopropyl phosphate pocket. Residue His-52 is the Proton acceptor of the active site. Arg-54 and His-59 together coordinate 1-deoxy-D-xylulose 5-phosphate. Glu-79 serves as the catalytic Proton acceptor. Residue Thr-109 coordinates 1-deoxy-D-xylulose 5-phosphate. The Proton donor role is filled by His-200. 3-amino-2-oxopropyl phosphate contacts are provided by residues Gly-201 and 222–223 (GH).

It belongs to the PNP synthase family. In terms of assembly, homooctamer; tetramer of dimers.

The protein resides in the cytoplasm. The catalysed reaction is 3-amino-2-oxopropyl phosphate + 1-deoxy-D-xylulose 5-phosphate = pyridoxine 5'-phosphate + phosphate + 2 H2O + H(+). The protein operates within cofactor biosynthesis; pyridoxine 5'-phosphate biosynthesis; pyridoxine 5'-phosphate from D-erythrose 4-phosphate: step 5/5. Catalyzes the complicated ring closure reaction between the two acyclic compounds 1-deoxy-D-xylulose-5-phosphate (DXP) and 3-amino-2-oxopropyl phosphate (1-amino-acetone-3-phosphate or AAP) to form pyridoxine 5'-phosphate (PNP) and inorganic phosphate. The chain is Pyridoxine 5'-phosphate synthase from Burkholderia pseudomallei (strain 1710b).